The primary structure comprises 72 residues: Translation initiation factor IF-1 (72 aa).

The region spanning 1-72 is the S1-like domain; that stretch reads MAKEDCIEME…TKGRIKFRSK (72 aa).

This sequence belongs to the IF-1 family. As to quaternary structure, component of the 30S ribosomal translation pre-initiation complex which assembles on the 30S ribosome in the order IF-2 and IF-3, IF-1 and N-formylmethionyl-tRNA(fMet); mRNA recruitment can occur at any time during PIC assembly.

The protein resides in the cytoplasm. In terms of biological role, one of the essential components for the initiation of protein synthesis. Stabilizes the binding of IF-2 and IF-3 on the 30S subunit to which N-formylmethionyl-tRNA(fMet) subsequently binds. Helps modulate mRNA selection, yielding the 30S pre-initiation complex (PIC). Upon addition of the 50S ribosomal subunit IF-1, IF-2 and IF-3 are released leaving the mature 70S translation initiation complex. In Francisella tularensis subsp. tularensis (strain FSC 198), this protein is Translation initiation factor IF-1.